The sequence spans 72 residues: Disintegrin crotatroxin (72 aa).

The 72-residue stretch at Ala-1–Gly-72 folds into the Disintegrin domain. 6 disulfides stabilise this stretch: Cys-5–Cys-20, Cys-7–Cys-15, Cys-14–Cys-37, Cys-28–Cys-34, Cys-33–Cys-58, and Cys-46–Cys-65. The Cell attachment site motif lies at Arg-50 to Asp-52.

It belongs to the venom metalloproteinase (M12B) family. P-II subfamily. P-IIa sub-subfamily. In terms of assembly, monomer. As to expression, expressed by the venom gland.

It localises to the secreted. Inhibits fibrinogen interaction with platelets. Acts by binding to the alpha-IIb/beta-3 (ITGA2B/ITGB3) on the platelet surface and inhibits aggregation induced by ADP, thrombin, platelet-activating factor and collagen. Its function is as follows. Inhibits ADP-induced platelet aggregation (IC(50) = 17.5nM), cancer cell migration in vitro, and experimental lung tumor colonization of cancer cells. The protein is Disintegrin crotatroxin of Crotalus atrox (Western diamondback rattlesnake).